Consider the following 231-residue polypeptide: Vacuolar protein sorting-associated protein 24 (231 aa).

The span at 184-195 shows a compositional bias: basic and acidic residues; it reads KAADAATHREQS. Positions 184 to 214 are disordered; that stretch reads KAADAATHREQSLKQALPSLSNGIAKDSTEI.

The protein belongs to the SNF7 family. Component of the endosomal sorting required for transport complex III (ESCRT-III).

It is found in the endosome membrane. It localises to the endomembrane system. Class E VPS protein implicated in concentration and sorting of cargo proteins of the multivesicular body (MVB) for incorporation into intralumenal vesicles. The lumenal sequestrated membrane proteins will be targeted into the vacuole after fusion of the endosome with the vacuole. This chain is Vacuolar protein sorting-associated protein 24 (vps24), found in Schizosaccharomyces pombe (strain 972 / ATCC 24843) (Fission yeast).